Here is a 452-residue protein sequence, read N- to C-terminus: Protein CLT3, chloroplastic (452 aa).

The transit peptide at 1-34 directs the protein to the chloroplast; sequence MATTSRRFTTGLFASITSVKSHSANRPQSISLIR. 10 helical membrane-spanning segments follow: residues 105-125, 137-157, 175-195, 202-222, 230-250, 258-278, 307-327, 353-373, 389-409, and 412-432; these read AEIV…RVMY, FFLA…ILYF, PFLI…AAAA, TTVL…IFLG, ILGC…GSGA, GVLW…GTVL, FQAI…GIPF, GAPF…IALL, TVSV…LGVA, and LPKG…LYSW.

It belongs to the CRT-like transporter family.

Its subcellular location is the plastid. The protein localises to the chloroplast membrane. Involved in thiol transport from the plastid to the cytosol. Transports probably both glutathione (GSH) and its precursor, gamma-glutamylcysteine (gamma-EC). Exhibits some functional redundancy with CLT1 in maintaining the root GSH pool. The polypeptide is Protein CLT3, chloroplastic (Arabidopsis thaliana (Mouse-ear cress)).